A 207-amino-acid chain; its full sequence is Putative transcriptional regulator (207 aa).

In terms of domain architecture, Response regulatory spans 3 to 118; that stretch reads KVLIVDDHPA…ELLLAAKAVL (116 aa). Residues aspartate 9 and aspartate 53 each carry the 4-aspartylphosphate modification. In terms of domain architecture, HTH luxR-type spans 140–205; it reads EARMLESLSD…GLIDFARRHE (66 aa). A DNA-binding region (H-T-H motif) is located at residues 155-174; sequence LQYLANGNTNKAIAQQLFLS.

Probable transcriptional regulator. The sequence is that of Putative transcriptional regulator from Pseudomonas aeruginosa (strain ATCC 15692 / DSM 22644 / CIP 104116 / JCM 14847 / LMG 12228 / 1C / PRS 101 / PAO1).